A 136-amino-acid polypeptide reads, in one-letter code: MLATRNRLRTSADFSTTVRSGVRNGRRNVVLYTAAIAAGEPSRIGFIVSKSVGNAVVRNLVKRRLREAGAASLREHGTGLAIVVRALPASASASWDQLREDYDAALESTLNRLAGRPQRAAAKGSAGTTQKGTPRA.

The segment at 116–136 (RPQRAAAKGSAGTTQKGTPRA) is disordered. Positions 126–136 (AGTTQKGTPRA) are enriched in polar residues.

This sequence belongs to the RnpA family. In terms of assembly, consists of a catalytic RNA component (M1 or rnpB) and a protein subunit.

It catalyses the reaction Endonucleolytic cleavage of RNA, removing 5'-extranucleotides from tRNA precursor.. Functionally, RNaseP catalyzes the removal of the 5'-leader sequence from pre-tRNA to produce the mature 5'-terminus. It can also cleave other RNA substrates such as 4.5S RNA. The protein component plays an auxiliary but essential role in vivo by binding to the 5'-leader sequence and broadening the substrate specificity of the ribozyme. The sequence is that of Ribonuclease P protein component from Pseudarthrobacter chlorophenolicus (strain ATCC 700700 / DSM 12829 / CIP 107037 / JCM 12360 / KCTC 9906 / NCIMB 13794 / A6) (Arthrobacter chlorophenolicus).